The following is a 144-amino-acid chain: uncharacterized protein (144 aa).

2 consecutive transmembrane segments (helical) span residues 10–30 (ILTR…GLGP) and 60–80 (YVFL…AIAV).

The protein localises to the membrane. This is an uncharacterized protein from Saccharomyces cerevisiae (strain ATCC 204508 / S288c) (Baker's yeast).